We begin with the raw amino-acid sequence, 488 residues long: GlcNAc-binding protein A (488 aa).

The signal sequence occupies residues 1 to 24; the sequence is MIMIITKKTLLPVTLALFSSGVMA. Residues 25–202 form the Chitin-binding type-4 domain; sequence HGYVSSVEGG…SFYNVIDVMF (178 aa). The Chitin-binding type-3 domain maps to 439 to 480; sequence AGSKVLATDGRIYECKPFPYSGYCIQWSPSATQFEPGVGSDW.

This sequence belongs to the GbpA family.

The protein resides in the secreted. In terms of biological role, probably interacts with GlcNAc residues. May promote attachment to both epithelial cell surfaces and chitin. The sequence is that of GlcNAc-binding protein A from Photobacterium profundum (strain SS9).